A 413-amino-acid polypeptide reads, in one-letter code: Gamma-glutamyl phosphate reductase (413 aa).

Belongs to the gamma-glutamyl phosphate reductase family.

Its subcellular location is the cytoplasm. The enzyme catalyses L-glutamate 5-semialdehyde + phosphate + NADP(+) = L-glutamyl 5-phosphate + NADPH + H(+). It functions in the pathway amino-acid biosynthesis; L-proline biosynthesis; L-glutamate 5-semialdehyde from L-glutamate: step 2/2. Catalyzes the NADPH-dependent reduction of L-glutamate 5-phosphate into L-glutamate 5-semialdehyde and phosphate. The product spontaneously undergoes cyclization to form 1-pyrroline-5-carboxylate. This chain is Gamma-glutamyl phosphate reductase, found in Rhodococcus jostii (strain RHA1).